We begin with the raw amino-acid sequence, 425 residues long: Serine--tRNA ligase (425 aa).

231 to 233 (TAE) contributes to the L-serine binding site. ATP is bound at residue 262 to 264 (RSE). E285 is an L-serine binding site. An ATP-binding site is contributed by 349–352 (EISS). Position 385 (S385) interacts with L-serine.

Belongs to the class-II aminoacyl-tRNA synthetase family. Type-1 seryl-tRNA synthetase subfamily. In terms of assembly, homodimer. The tRNA molecule binds across the dimer.

The protein resides in the cytoplasm. It carries out the reaction tRNA(Ser) + L-serine + ATP = L-seryl-tRNA(Ser) + AMP + diphosphate + H(+). It catalyses the reaction tRNA(Sec) + L-serine + ATP = L-seryl-tRNA(Sec) + AMP + diphosphate + H(+). It participates in aminoacyl-tRNA biosynthesis; selenocysteinyl-tRNA(Sec) biosynthesis; L-seryl-tRNA(Sec) from L-serine and tRNA(Sec): step 1/1. Its function is as follows. Catalyzes the attachment of serine to tRNA(Ser). Is also able to aminoacylate tRNA(Sec) with serine, to form the misacylated tRNA L-seryl-tRNA(Sec), which will be further converted into selenocysteinyl-tRNA(Sec). This chain is Serine--tRNA ligase, found in Bartonella tribocorum (strain CIP 105476 / IBS 506).